Reading from the N-terminus, the 375-residue chain is Succinyl-diaminopimelate desuccinylase (375 aa).

Zn(2+) is bound at residue H66. Residue D68 is part of the active site. D99 is a binding site for Zn(2+). Catalysis depends on E133, which acts as the Proton acceptor. Zn(2+) contacts are provided by E134, E162, and H348.

It belongs to the peptidase M20A family. DapE subfamily. As to quaternary structure, homodimer. It depends on Zn(2+) as a cofactor. Requires Co(2+) as cofactor.

The catalysed reaction is N-succinyl-(2S,6S)-2,6-diaminopimelate + H2O = (2S,6S)-2,6-diaminopimelate + succinate. The protein operates within amino-acid biosynthesis; L-lysine biosynthesis via DAP pathway; LL-2,6-diaminopimelate from (S)-tetrahydrodipicolinate (succinylase route): step 3/3. In terms of biological role, catalyzes the hydrolysis of N-succinyl-L,L-diaminopimelic acid (SDAP), forming succinate and LL-2,6-diaminopimelate (DAP), an intermediate involved in the bacterial biosynthesis of lysine and meso-diaminopimelic acid, an essential component of bacterial cell walls. The sequence is that of Succinyl-diaminopimelate desuccinylase from Stenotrophomonas maltophilia (strain R551-3).